The sequence spans 252 residues: Pantothenate synthetase (252 aa).

Residue 29–36 (MGNLHAGH) coordinates ATP. Catalysis depends on histidine 36, which acts as the Proton donor. Glutamine 60 contacts (R)-pantoate. Beta-alanine is bound at residue glutamine 60. ATP is bound at residue 146–149 (GEKD). A (R)-pantoate-binding site is contributed by glutamine 152. Residues valine 175 and 183–186 (CSSR) contribute to the ATP site.

Belongs to the pantothenate synthetase family. In terms of assembly, homodimer.

It is found in the cytoplasm. It carries out the reaction (R)-pantoate + beta-alanine + ATP = (R)-pantothenate + AMP + diphosphate + H(+). It participates in cofactor biosynthesis; (R)-pantothenate biosynthesis; (R)-pantothenate from (R)-pantoate and beta-alanine: step 1/1. Its function is as follows. Catalyzes the condensation of pantoate with beta-alanine in an ATP-dependent reaction via a pantoyl-adenylate intermediate. The polypeptide is Pantothenate synthetase (Legionella pneumophila subsp. pneumophila (strain Philadelphia 1 / ATCC 33152 / DSM 7513)).